We begin with the raw amino-acid sequence, 349 residues long: DCD domain-containing protein NRP (349 aa).

Residues 157–201 (NNNKNKGIDEDHQIQKGGKKNRKNQQNNNNQRNEDDKNNGLDKRF) are disordered. Basic and acidic residues predominate over residues 188–201 (RNEDDKNNGLDKRF). The DCD domain maps to 214 to 346 (ETIGGYIFVC…VLSLLDIFAD (133 aa)).

Interacts with CRY2 in the cytoplasm. Interacts with Verticillium dahliae PevD1. Interacts with FYPP3. Highly expressed in sensecent leaves, cauline leaves and sepals. Expressed in the shoot apical meristem, leaf veins, central cylinder, root hair zone, root tips, rosette leaves, flowers and siliques.

The protein localises to the cytoplasm. Contributes to the initial phase of responses to abiotic and biotic stress signals. Binds FYPP3 and facilitates FYPP3 degradation to promote abscisic acid (ABA) response. The chain is DCD domain-containing protein NRP from Arabidopsis thaliana (Mouse-ear cress).